Here is a 563-residue protein sequence, read N- to C-terminus: Mitochondrial distribution and morphology protein 34 (563 aa).

The region spanning 1–195 (MAFNFNWSPL…LPAIIHRLSL (195 aa)) is the SMP-LTD domain. Disordered regions lie at residues 298 to 460 (ERGD…QIPT) and 535 to 563 (RHDK…PKAL). 2 stretches are compositionally biased toward polar residues: residues 303-332 (AGTT…FSNR) and 346-357 (SLVNMNSATTGL). Positions 365–383 (SRSHTTRKKKNRVVNLRKS) are enriched in basic residues. 2 stretches are compositionally biased toward polar residues: residues 386-402 (TDNV…SITA) and 444-460 (PSRS…QIPT).

This sequence belongs to the MDM34 family. In terms of assembly, component of the ER-mitochondria encounter structure (ERMES) or MDM complex, composed of mmm1, mdm10, mdm12 and mdm34.

The protein resides in the mitochondrion outer membrane. Its function is as follows. Component of the ERMES/MDM complex, which serves as a molecular tether to connect the endoplasmic reticulum (ER) and mitochondria. Components of this complex are involved in the control of mitochondrial shape and protein biogenesis, and function in nonvesicular lipid trafficking between the ER and mitochondria. Mdm34 is required for the interaction of the ER-resident membrane protein mmm1 and the outer mitochondrial membrane-resident beta-barrel protein mdm10. The sequence is that of Mitochondrial distribution and morphology protein 34 from Sclerotinia sclerotiorum (strain ATCC 18683 / 1980 / Ss-1) (White mold).